A 114-amino-acid chain; its full sequence is DNA-directed RNA polymerase subunit omega (114 aa).

It belongs to the RNA polymerase subunit omega family. In terms of assembly, the RNAP catalytic core consists of 2 alpha, 1 beta, 1 beta' and 1 omega subunit. When a sigma factor is associated with the core the holoenzyme is formed, which can initiate transcription.

The enzyme catalyses RNA(n) + a ribonucleoside 5'-triphosphate = RNA(n+1) + diphosphate. Promotes RNA polymerase assembly. Latches the N- and C-terminal regions of the beta' subunit thereby facilitating its interaction with the beta and alpha subunits. The sequence is that of DNA-directed RNA polymerase subunit omega from Erythrobacter litoralis (strain HTCC2594).